Reading from the N-terminus, the 166-residue chain is FMN reductase (NADH) RutF (166 aa).

The protein belongs to the non-flavoprotein flavin reductase family. RutF subfamily.

The enzyme catalyses FMNH2 + NAD(+) = FMN + NADH + 2 H(+). In terms of biological role, catalyzes the reduction of FMN to FMNH2 which is used to reduce pyrimidine by RutA via the Rut pathway. The polypeptide is FMN reductase (NADH) RutF (Cronobacter turicensis (strain DSM 18703 / CCUG 55852 / LMG 23827 / z3032)).